We begin with the raw amino-acid sequence, 156 residues long: Small ribosomal subunit protein uS7 (156 aa).

This sequence belongs to the universal ribosomal protein uS7 family. Part of the 30S ribosomal subunit. Contacts proteins S9 and S11.

In terms of biological role, one of the primary rRNA binding proteins, it binds directly to 16S rRNA where it nucleates assembly of the head domain of the 30S subunit. Is located at the subunit interface close to the decoding center, probably blocks exit of the E-site tRNA. This chain is Small ribosomal subunit protein uS7, found in Tremblaya princeps.